The primary structure comprises 272 residues: NH(3)-dependent NAD(+) synthetase (272 aa).

ATP is bound at residue 45-52; it reads GISGGQDS. Aspartate 51 is a binding site for Mg(2+). A deamido-NAD(+)-binding site is contributed by arginine 138. Threonine 158 contacts ATP. Glutamate 163 provides a ligand contact to Mg(2+). Lysine 171 and aspartate 178 together coordinate deamido-NAD(+). ATP contacts are provided by lysine 187 and threonine 209. 258 to 259 serves as a coordination point for deamido-NAD(+); it reads HK.

The protein belongs to the NAD synthetase family. As to quaternary structure, homodimer.

The catalysed reaction is deamido-NAD(+) + NH4(+) + ATP = AMP + diphosphate + NAD(+) + H(+). The protein operates within cofactor biosynthesis; NAD(+) biosynthesis; NAD(+) from deamido-NAD(+) (ammonia route): step 1/1. Its function is as follows. Catalyzes the ATP-dependent amidation of deamido-NAD to form NAD. Uses ammonia as a nitrogen source. This Bacillus cereus (strain G9842) protein is NH(3)-dependent NAD(+) synthetase.